Here is a 111-residue protein sequence, read N- to C-terminus: uncharacterized protein (111 aa).

A run of 3 helical transmembrane segments spans residues 22–42 (ASLI…ANIT), 48–68 (LTPA…VSVL), and 75–95 (VLVT…PKIL).

The protein resides in the membrane. This is an uncharacterized protein from Saccharomyces cerevisiae (strain ATCC 204508 / S288c) (Baker's yeast).